Consider the following 332-residue polypeptide: Oxygen-dependent coproporphyrinogen-III oxidase (332 aa).

Serine 119 contacts coproporphyrinogen III. The active-site Proton donor is the histidine 133. Residues 135-137 (NVR) and 284-285 (GR) contribute to the coproporphyrinogen III site.

It belongs to the aerobic coproporphyrinogen-III oxidase family. In terms of assembly, homodimer.

The enzyme catalyses coproporphyrinogen III + O2 + 2 H(+) = protoporphyrinogen IX + 2 CO2 + 2 H2O. It participates in porphyrin-containing compound metabolism; protoporphyrin-IX biosynthesis; protoporphyrinogen-IX from coproporphyrinogen-III (O2 route): step 1/1. In terms of biological role, involved in the heme biosynthesis. Catalyzes the aerobic oxidative decarboxylation of propionate groups of rings A and B of coproporphyrinogen-III to yield the vinyl groups in protoporphyrinogen-IX. This Dictyostelium discoideum (Social amoeba) protein is Oxygen-dependent coproporphyrinogen-III oxidase (cpox).